The sequence spans 465 residues: Adenosylhomocysteinase (465 aa).

3 residues coordinate substrate: Thr56, Asp131, and Glu191. 192-194 is a binding site for NAD(+); the sequence is TTT. Positions 221 and 225 each coordinate substrate. Residues Asn226, 255-260, Glu278, Asn313, 334-336, and Asn379 contribute to the NAD(+) site; these read GYGDVG and IGH.

Belongs to the adenosylhomocysteinase family. The cofactor is NAD(+).

It localises to the cytoplasm. The enzyme catalyses S-adenosyl-L-homocysteine + H2O = L-homocysteine + adenosine. It participates in amino-acid biosynthesis; L-homocysteine biosynthesis; L-homocysteine from S-adenosyl-L-homocysteine: step 1/1. Its function is as follows. May play a key role in the regulation of the intracellular concentration of adenosylhomocysteine. The polypeptide is Adenosylhomocysteinase (Bartonella henselae (strain ATCC 49882 / DSM 28221 / CCUG 30454 / Houston 1) (Rochalimaea henselae)).